We begin with the raw amino-acid sequence, 534 residues long: Bifunctional pantoate ligase/cytidylate kinase (534 aa).

A pantoate--beta-alanine ligase region spans residues 1-302; that stretch reads MRLLTTVAAL…LGSTRLIDNT (302 aa). 48-55 is an ATP binding site; sequence MGSLHQGH. The active-site Proton donor is His-55. Gln-79 contributes to the (R)-pantoate binding site. Position 79 (Gln-79) interacts with beta-alanine. 172–175 contributes to the ATP binding site; sequence GQKD. Gln-178 is a (R)-pantoate binding site. ATP contacts are provided by residues Val-201 and 209–212; that span reads CSSR. Positions 303-534 are cytidylate kinase; that stretch reads ILRDRQPIIA…DYYQQRLSQW (232 aa).

The protein in the N-terminal section; belongs to the pantothenate synthetase family. It in the C-terminal section; belongs to the cytidylate kinase family. Type 1 subfamily.

Its subcellular location is the cytoplasm. The enzyme catalyses (R)-pantoate + beta-alanine + ATP = (R)-pantothenate + AMP + diphosphate + H(+). The catalysed reaction is CMP + ATP = CDP + ADP. It carries out the reaction dCMP + ATP = dCDP + ADP. It functions in the pathway cofactor biosynthesis; (R)-pantothenate biosynthesis; (R)-pantothenate from (R)-pantoate and beta-alanine: step 1/1. Functionally, catalyzes the condensation of pantoate with beta-alanine in an ATP-dependent reaction via a pantoyl-adenylate intermediate. Its function is as follows. Catalyzes the transfer of a phosphate group from ATP to either CMP or dCMP to form CDP or dCDP and ADP, respectively. This chain is Bifunctional pantoate ligase/cytidylate kinase, found in Trichormus variabilis (strain ATCC 29413 / PCC 7937) (Anabaena variabilis).